Here is a 298-residue protein sequence, read N- to C-terminus: Distal tail protein (298 aa).

The protein belongs to the skunalikevirus distal tail protein family. In terms of assembly, homohexamer. Interacts with the receptor binding protein.

It localises to the virion. Its function is as follows. Forms the distal part of the tail. Self-associates as two rings organized back to back, with a central channel allowing DNA ejection. The polypeptide is Distal tail protein (Lactococcus lactis (Lactococcus lactis bacteriophage p2)).